The primary structure comprises 285 residues: Avenin-like b1 (285 aa).

Residues 1–18 (MKVFILALLALTATTAIA) form the signal peptide.

It belongs to the prolamin family. Post-translationally, contains disulfide bonds.

Its function is as follows. Seed storage protein. Might be integrated via inter-chain disulfide bonds within the glutenin polymer. This Triticum aestivum (Wheat) protein is Avenin-like b1 (AVNLB).